The sequence spans 217 residues: ATP phosphoribosyltransferase (217 aa).

Belongs to the ATP phosphoribosyltransferase family. Short subfamily. Heteromultimer composed of HisG and HisZ subunits.

Its subcellular location is the cytoplasm. The catalysed reaction is 1-(5-phospho-beta-D-ribosyl)-ATP + diphosphate = 5-phospho-alpha-D-ribose 1-diphosphate + ATP. It functions in the pathway amino-acid biosynthesis; L-histidine biosynthesis; L-histidine from 5-phospho-alpha-D-ribose 1-diphosphate: step 1/9. In terms of biological role, catalyzes the condensation of ATP and 5-phosphoribose 1-diphosphate to form N'-(5'-phosphoribosyl)-ATP (PR-ATP). Has a crucial role in the pathway because the rate of histidine biosynthesis seems to be controlled primarily by regulation of HisG enzymatic activity. This chain is ATP phosphoribosyltransferase, found in Prochlorococcus marinus (strain MIT 9313).